Reading from the N-terminus, the 199-residue chain is dTTP/UTP pyrophosphatase (199 aa).

Aspartate 78 (proton acceptor) is an active-site residue.

The protein belongs to the Maf family. YhdE subfamily. A divalent metal cation is required as a cofactor.

The protein localises to the cytoplasm. It carries out the reaction dTTP + H2O = dTMP + diphosphate + H(+). The enzyme catalyses UTP + H2O = UMP + diphosphate + H(+). Nucleoside triphosphate pyrophosphatase that hydrolyzes dTTP and UTP. May have a dual role in cell division arrest and in preventing the incorporation of modified nucleotides into cellular nucleic acids. The protein is dTTP/UTP pyrophosphatase of Clostridium acetobutylicum (strain ATCC 824 / DSM 792 / JCM 1419 / IAM 19013 / LMG 5710 / NBRC 13948 / NRRL B-527 / VKM B-1787 / 2291 / W).